A 238-amino-acid polypeptide reads, in one-letter code: Thymidine kinase, cytosolic (238 aa).

Position 2 is an N-acetylserine (Ser2). Ser2 and Ser13 each carry phosphoserine. ATP is bound by residues 26–33, 58–60, and 97–100; these read GPMFSGKS, DTR, and DEGQ. Glu98 serves as the catalytic Proton acceptor. Phe128 is a substrate binding site. Zn(2+) contacts are provided by Cys153 and Cys156. Substrate contacts are provided by residues 172-176 and Tyr181; that span reads VEVIG. Zn(2+)-binding residues include Cys185 and Cys188. Positions 206–208 match the KEN box motif; that stretch reads KEN. A Phosphoserine modification is found at Ser235.

The protein belongs to the thymidine kinase family. Homotetramer. Tetramerization from dimerization is induced by ATP and increases catalytic efficiency due to a high affinity for thymidine. Tetramerization is inhibited by phosphorylation at Ser-13. Interacts (via the KEN box) with FZR1. In terms of processing, phosphorylated on Ser-13 in mitosis. Phosphorylation of Ser-13 by CDK1 during mitosis reduces homotetramerization and catalytic efficiency when DNA replication is complete and intracellular TK1 is still present at a high level. Polyubiquitinated. Postmitosis, ubiquitination leads to proteasomal degradation. The KEN box sequence located at the C-terminal region targets for degradation by the anaphase promoting complex (APC/C) activated and rate-limited by FZR1.

It is found in the cytoplasm. The catalysed reaction is thymidine + ATP = dTMP + ADP + H(+). Functionally, cell-cycle-regulated enzyme of importance in nucleotide metabolism. Catalyzes the first enzymatic step in the salvage pathway converting thymidine into thymidine monophosphate. Transcriptional regulation limits expression to the S phase of the cell cycle and transient expression coincides with the oscillation in the intracellular dTTP concentration. This Bos taurus (Bovine) protein is Thymidine kinase, cytosolic (TK1).